The following is a 56-amino-acid chain: MTILNIVSNLTLNKKSYNATIGKPISSGLTNYGAINISGYQVITKFFQSDNSLRNP.

This is an uncharacterized protein from Dictyostelium discoideum (Social amoeba).